Here is a 421-residue protein sequence, read N- to C-terminus: Zinc finger protein 584 (421 aa).

The KRAB domain maps to 17–88 (VMFEDVTVYF…SWVDVTPVSR (72 aa)). The segment covering 120–129 (QHQDTHSEGK) has biased composition (basic and acidic residues). The tract at residues 120 to 146 (QHQDTHSEGKPRRHTEHGAAFPPGSSC) is disordered. 8 consecutive C2H2-type zinc fingers follow at residues 159 to 181 (FKCS…LITH), 214 to 236 (HVCN…QKVH), 242 to 264 (FKCS…QRIH), 270 to 292 (YECS…RKVH), 298 to 320 (YECT…QRVH), 326 to 348 (FECK…WKVH), 354 to 376 (YECS…QQFH), and 382 to 404 (YECT…KKVH). The segment at 402-421 (KVHTPERRQEDRAHGKVVSC) is disordered. Positions 404 to 415 (HTPERRQEDRAH) are enriched in basic and acidic residues.

This sequence belongs to the krueppel C2H2-type zinc-finger protein family.

Its subcellular location is the nucleus. Functionally, may be involved in transcriptional regulation. This is Zinc finger protein 584 (ZNF584) from Homo sapiens (Human).